The chain runs to 311 residues: Homoserine kinase (311 aa).

Residue 89-99 (PFARGLGSSAT) coordinates ATP.

This sequence belongs to the GHMP kinase family. Homoserine kinase subfamily.

It localises to the cytoplasm. The catalysed reaction is L-homoserine + ATP = O-phospho-L-homoserine + ADP + H(+). It participates in amino-acid biosynthesis; L-threonine biosynthesis; L-threonine from L-aspartate: step 4/5. Catalyzes the ATP-dependent phosphorylation of L-homoserine to L-homoserine phosphate. The chain is Homoserine kinase from Halothermothrix orenii (strain H 168 / OCM 544 / DSM 9562).